A 161-amino-acid polypeptide reads, in one-letter code: MATLQSLADLNRSNTGAVDPANEAPVHVQKLDAQGRAYATGKRKDAVARVWIKPGNGTVTINKRPVETYFARPVLRMILRQPLEIAGRVDQYDITVTVAGGGLSGQAGAVRHGLSKALTYYEPELRAPLKREGFLTRDARVVERKKYGRKKARRSFQFSKR.

This sequence belongs to the universal ribosomal protein uS9 family.

The sequence is that of Small ribosomal subunit protein uS9 from Methylobacterium radiotolerans (strain ATCC 27329 / DSM 1819 / JCM 2831 / NBRC 15690 / NCIMB 10815 / 0-1).